We begin with the raw amino-acid sequence, 344 residues long: F17a-G fimbrial adhesin (344 aa).

Positions 1-22 are cleaved as a signal peptide; the sequence is MTNFYKVFLAVFILVCCNISQA. The receptor-binding lectin domain stretch occupies residues 23–199; that stretch reads AVSFIGSTEN…SLNPFTLNDT (177 aa). Residues 65-66, 110-111, and 139-142 each bind a carbohydrate; these read AN, DT, and STQG. Cysteine 75 and cysteine 132 are joined by a disulfide. The fimbrillin-binding domain stretch occupies residues 200 to 344; it reads VTSCRLLTPS…GISTFTFSYQ (145 aa). Residues 288–308 form a disordered region; the sequence is LKFGPDSPVKGNENQWQLSTG. Residues 299-308 show a composition bias toward polar residues; sequence NENQWQLSTG.

It belongs to the fimbrial protein family.

The protein localises to the fimbrium. Its function is as follows. Essential fimbrial adhesion factor that mediates binding to N-acetylglucosamine-containing receptors in the host intestinal microvilli, leading to colonization of the intestinal tissue, and diarrhea or septicemia. Also confers adhesiveness to laminin and basement membranes. The polypeptide is F17a-G fimbrial adhesin (f17aG) (Escherichia coli).